The chain runs to 44 residues: Conotoxin Fi11.11 (44 aa).

4 cysteine pairs are disulfide-bonded: cysteine 1/cysteine 15, cysteine 8/cysteine 20, cysteine 14/cysteine 24, and cysteine 19/cysteine 28. Asparagine 30 is subject to Asparagine amide. A propeptide spanning residues 35–44 (QVPLKSFGQR) is cleaved from the precursor.

The protein belongs to the conotoxin I2 superfamily. In terms of tissue distribution, expressed by the venom duct.

It is found in the secreted. This chain is Conotoxin Fi11.11, found in Conus figulinus (Fig cone).